Consider the following 515-residue polypeptide: GMP synthase [glutamine-hydrolyzing] (515 aa).

The region spanning K6–D198 is the Glutamine amidotransferase type-1 domain. The active-site Nucleophile is C83. Catalysis depends on residues H172 and E174. In terms of domain architecture, GMPS ATP-PPase spans W199 to R390. S226–T232 is an ATP binding site.

In terms of assembly, homodimer.

It catalyses the reaction XMP + L-glutamine + ATP + H2O = GMP + L-glutamate + AMP + diphosphate + 2 H(+). It functions in the pathway purine metabolism; GMP biosynthesis; GMP from XMP (L-Gln route): step 1/1. Its function is as follows. Catalyzes the synthesis of GMP from XMP. The protein is GMP synthase [glutamine-hydrolyzing] of Nitratidesulfovibrio vulgaris (strain DSM 19637 / Miyazaki F) (Desulfovibrio vulgaris).